The sequence spans 369 residues: Biglycan (369 aa).

Positions 1–16 (MWPLWPLAALLALSQA) are cleaved as a signal peptide. Positions 17–37 (LPFEQKAFWDFTLDDGLPMLN) are excised as a propeptide. 2 O-linked (Xyl...) (glycosaminoglycan) serine glycosylation sites follow: Ser-42 and Ser-48. 2 disulfides stabilise this stretch: Cys-64/Cys-70 and Cys-68/Cys-77. LRR repeat units follow at residues 83-103 (KAVP…NNDI), 104-127 (SELR…NNKI), 128-151 (SKIH…KNHL), 152-172 (VEIP…DNRI), 173-196 (RKVP…GNPL), 197-221 (ENSG…EAKL), 222-242 (TGIP…HNKI), 243-266 (QAIE…HNQI), 267-290 (RMIE…NNKL), 291-313 (SRVP…TNNI), 314-343 (TKVG…NNPV), and 344-369 (PYWE…NYKK). Ser-181 and Ser-199 each carry an O-linked (Xyl...) (glycosaminoglycan) serine glycan. N-linked (GlcNAc...) asparagine glycans are attached at residues Asn-271 and Asn-312. A disulfide bridge links Cys-322 with Cys-355.

It belongs to the small leucine-rich proteoglycan (SLRP) family. SLRP class I subfamily. In terms of assembly, homodimer. Forms a ternary complex with MFAP2 and ELN. Post-translationally, the two attached glycosaminoglycan chains can be either chondroitin sulfate or dermatan sulfate. As to expression, found in several connective tissues, especially in articular cartilages.

It localises to the secreted. It is found in the extracellular space. Its subcellular location is the extracellular matrix. Functionally, may be involved in collagen fiber assembly. The sequence is that of Biglycan (BGN) from Bos taurus (Bovine).